The sequence spans 239 residues: Putative ABC transporter ATP-binding protein BR1368/BS1330_I1363 (239 aa).

In terms of domain architecture, ABC transporter spans 5–234 (LSLDRVSVSR…EQVHLHYVEA (230 aa)). Residue 37-44 (GDNGVGKT) coordinates ATP.

The protein belongs to the ABC transporter superfamily.

Its subcellular location is the cell inner membrane. In terms of biological role, probably part of an ABC transporter complex. Responsible for energy coupling to the transport system. This chain is Putative ABC transporter ATP-binding protein BR1368/BS1330_I1363, found in Brucella suis biovar 1 (strain 1330).